We begin with the raw amino-acid sequence, 34 residues long: Photosystem II reaction center protein M (34 aa).

A helical transmembrane segment spans residues glycine 7 to isoleucine 27.

Belongs to the PsbM family. As to quaternary structure, PSII is composed of 1 copy each of membrane proteins PsbA, PsbB, PsbC, PsbD, PsbE, PsbF, PsbH, PsbI, PsbJ, PsbK, PsbL, PsbM, PsbT, PsbX, PsbY, PsbZ, Psb30/Ycf12, peripheral proteins PsbO, CyanoQ (PsbQ), PsbU, PsbV and a large number of cofactors. It forms dimeric complexes.

It is found in the cellular thylakoid membrane. One of the components of the core complex of photosystem II (PSII). PSII is a light-driven water:plastoquinone oxidoreductase that uses light energy to abstract electrons from H(2)O, generating O(2) and a proton gradient subsequently used for ATP formation. It consists of a core antenna complex that captures photons, and an electron transfer chain that converts photonic excitation into a charge separation. This subunit is found at the monomer-monomer interface. In Synechococcus sp. (strain CC9902), this protein is Photosystem II reaction center protein M.